The following is a 372-amino-acid chain: Glutamate 5-kinase (372 aa).

Residue Lys14 coordinates ATP. Residues Ser54, Asp141, and Asn153 each contribute to the substrate site. ATP is bound at residue 173–174 (TD). A PUA domain is found at 280-358 (RGHVVIDAGA…GEIETVLGYM (79 aa)).

The protein belongs to the glutamate 5-kinase family.

Its subcellular location is the cytoplasm. It catalyses the reaction L-glutamate + ATP = L-glutamyl 5-phosphate + ADP. It functions in the pathway amino-acid biosynthesis; L-proline biosynthesis; L-glutamate 5-semialdehyde from L-glutamate: step 1/2. Its function is as follows. Catalyzes the transfer of a phosphate group to glutamate to form L-glutamate 5-phosphate. The protein is Glutamate 5-kinase of Burkholderia vietnamiensis (strain G4 / LMG 22486) (Burkholderia cepacia (strain R1808)).